Here is a 569-residue protein sequence, read N- to C-terminus: Urease subunit alpha (569 aa).

One can recognise a Urease domain in the interval 131–569 (GGIDSHIHFI…LPLAQRYFLF (439 aa)). Residues His136, His138, and Lys219 each coordinate Ni(2+). Lys219 carries the post-translational modification N6-carboxylysine. Substrate is bound at residue His221. 2 residues coordinate Ni(2+): His248 and His274. The active-site Proton donor is His322. Asp362 serves as a coordination point for Ni(2+).

Belongs to the metallo-dependent hydrolases superfamily. Urease alpha subunit family. As to quaternary structure, heterotrimer of UreA (gamma), UreB (beta) and UreC (alpha) subunits. Three heterotrimers associate to form the active enzyme. It depends on Ni cation as a cofactor. Carboxylation allows a single lysine to coordinate two nickel ions.

Its subcellular location is the cytoplasm. It carries out the reaction urea + 2 H2O + H(+) = hydrogencarbonate + 2 NH4(+). The protein operates within nitrogen metabolism; urea degradation; CO(2) and NH(3) from urea (urease route): step 1/1. This chain is Urease subunit alpha, found in Herpetosiphon aurantiacus (strain ATCC 23779 / DSM 785 / 114-95).